A 70-amino-acid polypeptide reads, in one-letter code: MWFEILPGIAVMGTCLVIPGLATAYIHRFTNGGKEKRVAHFVYHWDLMERDRHISGVNRYYVSKGLENID.

A helical transmembrane segment spans residues 1–21 (MWFEILPGIAVMGTCLVIPGL).

Belongs to the complex I NDUFA1 subunit family. Complex I is composed of 45 different subunits.

The protein resides in the mitochondrion inner membrane. Accessory subunit of the mitochondrial membrane respiratory chain NADH dehydrogenase (Complex I), that is believed not to be involved in catalysis. Complex I functions in the transfer of electrons from NADH to the respiratory chain. The immediate electron acceptor for the enzyme is believed to be ubiquinone. The chain is NADH dehydrogenase [ubiquinone] 1 alpha subcomplex subunit 1 (NDUFA1) from Varecia rubra (Red ruffed lemur).